The following is a 1561-amino-acid chain: ABC-type transporter phomO' (1561 aa).

A run of 7 helical transmembrane segments spans residues 34-54 (LYFEEVVFVLVPSCVFILLAA), 110-130 (CTAGLLVTLHVAGLILLCTTV), 139-159 (SVPASVVAALAFGVVPVLAHF), 172-192 (SSSLLVGLFLCVAVLLRAPLV), 202-222 (GSALVAVEIASLVLQLVLIAV), 314-334 (LGLYALAPVIPRLCLAGFTLA), and 358-378 (GLIGATFLIYTGIAVSTGWYW). The ABC transmembrane type-1 1 domain occupies 326 to 599 (LCLAGFTLAQ…LLQIIPSFGA (274 aa)). N-linked (GlcNAc...) asparagine glycosylation is present at asparagine 384. 4 helical membrane passes run 428-448 (LAYAHELWVAPIETAIGTWML), 452-472 (VGPPGLVVLGIIGVCLGTSTY), 535-555 (LIVGTLLSSYSTATLAPVLVF), and 577-597 (LIWISLLASPLIQLLQIIPSF). Residues 645-871 (IHNSSFSYTD…VEDENGDVDN (227 aa)) form the ABC transporter 1 domain. The N-linked (GlcNAc...) asparagine glycan is linked to asparagine 647. 678–685 (GPAGCGKS) contributes to the ATP binding site. Asparagine 721 is a glycosylation site (N-linked (GlcNAc...) asparagine). The segment at 853-899 (YQFPPSQADVEDENGDVDNGAENTRPRESSHTTEAQSGPPEPKSKPT) is disordered. 4 helical membrane passes run 913-933 (SIGFLNLVLFIGGGIIFAFCL), 969-989 (VLPLIAVAGWVAQLMMLIVPL), 1037-1054 (LFNTAAALLTGIAQVILI), and 1147-1167 (LVLNLVVAGLALVVMGAAVGL). The ABC transmembrane type-1 2 domain occupies 920-1209 (VLFIGGGIIF…LLTAWTSLET (290 aa)). An N-linked (GlcNAc...) asparagine glycan is attached at asparagine 1189. The segment covering 1229 to 1238 (DVLVRPDSLD) has biased composition (basic and acidic residues). The interval 1229–1298 (DVLVRPDSLD…DVAADGEKHE (70 aa)) is disordered. Residues 1269-1280 (YDDDDESDENTD) show a composition bias toward acidic residues. The 249-residue stretch at 1297–1545 (HEATTITTTS…SDIFAFFGRS (249 aa)) folds into the ABC transporter 2 domain. Residue 1333-1340 (GRTGSGKS) participates in ATP binding. A glycan (N-linked (GlcNAc...) asparagine) is linked at asparagine 1496.

Belongs to the ABC transporter superfamily. ABCC family. Conjugate transporter (TC 3.A.1.208) subfamily.

Its subcellular location is the membrane. In terms of biological role, ABC-type transporter; part of the gene cluster that mediates the biosynthesis of the phomopsins, a group of hexapeptide mycotoxins which infects lupins and causes lupinosis disease in livestock. This Diaporthe leptostromiformis (Lupinosis disease fungus) protein is ABC-type transporter phomO'.